A 154-amino-acid chain; its full sequence is Protein-export protein SecB (154 aa).

It belongs to the SecB family. As to quaternary structure, homotetramer, a dimer of dimers. One homotetramer interacts with 1 SecA dimer.

The protein localises to the cytoplasm. In terms of biological role, one of the proteins required for the normal export of preproteins out of the cell cytoplasm. It is a molecular chaperone that binds to a subset of precursor proteins, maintaining them in a translocation-competent state. It also specifically binds to its receptor SecA. The polypeptide is Protein-export protein SecB (Vibrio cholerae serotype O1 (strain ATCC 39541 / Classical Ogawa 395 / O395)).